A 329-amino-acid polypeptide reads, in one-letter code: Beta-ketoacyl-[acyl-carrier-protein] synthase III (329 aa).

Active-site residues include cysteine 113 and histidine 255. Positions 256 to 260 are ACP-binding; the sequence is QANQR. Asparagine 285 is a catalytic residue.

Belongs to the thiolase-like superfamily. FabH family. Homodimer.

It is found in the cytoplasm. It catalyses the reaction malonyl-[ACP] + acetyl-CoA + H(+) = 3-oxobutanoyl-[ACP] + CO2 + CoA. It participates in lipid metabolism; fatty acid biosynthesis. In terms of biological role, catalyzes the condensation reaction of fatty acid synthesis by the addition to an acyl acceptor of two carbons from malonyl-ACP. Catalyzes the first condensation reaction which initiates fatty acid synthesis and may therefore play a role in governing the total rate of fatty acid production. Possesses both acetoacetyl-ACP synthase and acetyl transacylase activities. Its substrate specificity determines the biosynthesis of branched-chain and/or straight-chain of fatty acids. This chain is Beta-ketoacyl-[acyl-carrier-protein] synthase III, found in Chlorobium luteolum (strain DSM 273 / BCRC 81028 / 2530) (Pelodictyon luteolum).